The following is a 415-amino-acid chain: Histidine--tRNA ligase (415 aa).

This sequence belongs to the class-II aminoacyl-tRNA synthetase family. As to quaternary structure, homodimer.

Its subcellular location is the cytoplasm. It catalyses the reaction tRNA(His) + L-histidine + ATP = L-histidyl-tRNA(His) + AMP + diphosphate + H(+). In Clostridium perfringens (strain SM101 / Type A), this protein is Histidine--tRNA ligase.